The primary structure comprises 97 residues: Small integral membrane protein 8 (97 aa).

A disordered region spans residues 1–22; sequence MSSAPEPPAFKKEPPKEKDLGN. Positions 9-20 are enriched in basic and acidic residues; that stretch reads AFKKEPPKEKDL. Residues 48-70 form a helical membrane-spanning segment; the sequence is PVMAFGLITISLCVAYIGYLHAT.

This sequence belongs to the SMIM8 family.

The protein resides in the membrane. This chain is Small integral membrane protein 8 (SMIM8), found in Bos taurus (Bovine).